The chain runs to 347 residues: Ribosomal RNA large subunit methyltransferase M (347 aa).

S-adenosyl-L-methionine contacts are provided by residues Ser-184, 217-220 (APGG), Asp-236, Asp-256, and Asp-272. Residue Lys-301 is the Proton acceptor of the active site.

The protein belongs to the class I-like SAM-binding methyltransferase superfamily. RNA methyltransferase RlmE family. RlmM subfamily. Monomer.

It localises to the cytoplasm. It catalyses the reaction cytidine(2498) in 23S rRNA + S-adenosyl-L-methionine = 2'-O-methylcytidine(2498) in 23S rRNA + S-adenosyl-L-homocysteine + H(+). Its function is as follows. Catalyzes the 2'-O-methylation at nucleotide C2498 in 23S rRNA. The sequence is that of Ribosomal RNA large subunit methyltransferase M from Xanthomonas oryzae pv. oryzae (strain PXO99A).